Consider the following 534-residue polypeptide: Protein tweety homolog 2 (534 aa).

The Extracellular segment spans residues 1 to 44; it reads MAAARVEYIAPWWVYWLHNFPHVDLSLRQKSPDFNPKDPGYQQT. A helical transmembrane segment spans residues 45–65; it reads LLFVALIVALCAAVNLLFVSV. The Cytoplasmic segment spans residues 66–87; it reads YLICLCCCKKEDETETKKTSSC. Residues 88 to 108 traverse the membrane as a helical segment; that stretch reads CVTWTAAVSGLLCCAAVGIGF. Residues 109-213 are Extracellular-facing; that stretch reads YGNSETNDGV…QTSTIEYYRW (105 aa). Ca(2+) is bound by residues Glu113 and Asp116. Asn129 is a glycosylation site (N-linked (GlcNAc...) asparagine). The RGD motif lies at 164-166; sequence RGD. Asn197 carries N-linked (GlcNAc...) asparagine glycosylation. A helical transmembrane segment spans residues 214–234; it reads LSYLLLFISYVVICLVTCVGL. Residues 235 to 240 lie on the Cytoplasmic side of the membrane; that stretch reads AKKSKC. Residues 241-261 traverse the membrane as a helical segment; the sequence is LLLIMLCFGLIALMLSWTSLA. Over 262–388 the chain is Extracellular; sequence LETSSAMGTS…IGICYDGVEG (127 aa). Cystine bridges form between Cys274/Cys382 and Cys300/Cys367. N-linked (GlcNAc...) asparagine glycosylation is found at Asn283 and Asn352. Residues 389-409 form a helical membrane-spanning segment; the sequence is MLYLGLFSLLAALAFTAMVCA. Topologically, residues 410 to 534 are cytoplasmic; sequence MPQAWKHLEA…SSIYSNVFPA (125 aa).

The protein belongs to the tweety family. In terms of assembly, forms cis-homodimers in the presence of Ca(+2) and forms monomers and trans-dimers in the absence of Ca(2+).

The protein resides in the cell membrane. The enzyme catalyses chloride(in) = chloride(out). The catalysed reaction is L-glutamate(out) = L-glutamate(in). Functionally, may act as a calcium-independent, swelling-dependent volume-regulated anion channel (VRAC-swell) which plays a pivotal role in the process of regulatory volume decrease (RVD) in the brain through the efflux of anions like chloride and organic osmolytes like glutamate. Probable large-conductance Ca(2+)-activated chloride channel. This is Protein tweety homolog 2 (ttyh2) from Xenopus tropicalis (Western clawed frog).